Here is a 201-residue protein sequence, read N- to C-terminus: ATP-dependent Clp protease proteolytic subunit 2 (201 aa).

Ser-98 acts as the Nucleophile in catalysis. His-123 is an active-site residue.

This sequence belongs to the peptidase S14 family. Fourteen ClpP subunits assemble into 2 heptameric rings which stack back to back to give a disk-like structure with a central cavity, resembling the structure of eukaryotic proteasomes.

It is found in the cytoplasm. It catalyses the reaction Hydrolysis of proteins to small peptides in the presence of ATP and magnesium. alpha-casein is the usual test substrate. In the absence of ATP, only oligopeptides shorter than five residues are hydrolyzed (such as succinyl-Leu-Tyr-|-NHMec, and Leu-Tyr-Leu-|-Tyr-Trp, in which cleavage of the -Tyr-|-Leu- and -Tyr-|-Trp bonds also occurs).. In terms of biological role, cleaves peptides in various proteins in a process that requires ATP hydrolysis. Has a chymotrypsin-like activity. Plays a major role in the degradation of misfolded proteins. The protein is ATP-dependent Clp protease proteolytic subunit 2 of Pseudomonas aeruginosa (strain ATCC 15692 / DSM 22644 / CIP 104116 / JCM 14847 / LMG 12228 / 1C / PRS 101 / PAO1).